Consider the following 105-residue polypeptide: Probable tetrachloroethene reductive dehalogenase membrane anchor protein (105 aa).

3 helical membrane-spanning segments follow: residues 3–23, 35–55, and 66–86; these read IYDVLIWMALGMTALLIQYGI, IPLQICGFLANFFFIFALAWG, and AIGMGFIFFGGTALIPAIITY.

The protein belongs to the PceB family.

It is found in the cell membrane. Functionally, may act as a membrane anchor for the tetrachloroethene reductive dehalogenase PceA. This chain is Probable tetrachloroethene reductive dehalogenase membrane anchor protein, found in Desulfitobacterium hafniense (Desulfitobacterium frappieri).